Reading from the N-terminus, the 205-residue chain is Recombination protein RecR (205 aa).

The segment at Cys60–Cys75 adopts a C4-type zinc-finger fold. A Toprim domain is found at Ser83 to Ser178.

Belongs to the RecR family.

Functionally, may play a role in DNA repair. It seems to be involved in an RecBC-independent recombinational process of DNA repair. It may act with RecF and RecO. The polypeptide is Recombination protein RecR (Bacteroides thetaiotaomicron (strain ATCC 29148 / DSM 2079 / JCM 5827 / CCUG 10774 / NCTC 10582 / VPI-5482 / E50)).